A 300-amino-acid chain; its full sequence is Protein p34 (300 aa).

The next 5 membrane-spanning stretches (helical) occupy residues 14–34, 39–59, 87–107, 119–139, and 170–190; these read YLSV…WVVT, ILAS…NLVA, SIFF…SLFI, IIMY…TYVI, and LSDY…LYIF.

It belongs to the cation diffusion facilitator (CDF) transporter (TC 2.A.4) family.

Its subcellular location is the cell membrane. This chain is Protein p34 (p34), found in Rickettsia prowazekii (strain Madrid E).